A 275-amino-acid chain; its full sequence is Exosome complex component Rrp42 (275 aa).

This sequence belongs to the RNase PH family. Rrp42 subfamily. In terms of assembly, component of the archaeal exosome complex. Forms a hexameric ring-like arrangement composed of 3 Rrp41-Rrp42 heterodimers. The hexameric ring associates with a trimer of Rrp4 and/or Csl4 subunits.

The protein resides in the cytoplasm. Functionally, non-catalytic component of the exosome, which is a complex involved in RNA degradation. Contributes to the structuring of the Rrp41 active site. This Saccharolobus islandicus (strain Y.N.15.51 / Yellowstone #2) (Sulfolobus islandicus) protein is Exosome complex component Rrp42.